We begin with the raw amino-acid sequence, 420 residues long: Tubulin-specific chaperone C (420 aa).

Residues 9–142 (NNNNDEENSK…QIDKSKEKYM (134 aa)) are a coiled coil. Residues 31–49 (KQRLQSKLEKREISNKEQI) show a composition bias toward basic and acidic residues. 3 disordered regions span residues 31-52 (KQRL…IDQS), 138-193 (KEKY…NNNK), and 222-257 (EIGN…NNNN). Low complexity-rich tracts occupy residues 172-192 (ETFN…NNNN) and 228-257 (INNN…NNNN). Residues 216 to 366 (PPKKEEEIGN…LKQQQQQQQQ (151 aa)) enclose the C-CAP/cofactor C-like domain.

This sequence belongs to the TBCC family. In terms of assembly, supercomplex made of cofactors A to E. Cofactors A and D function by capturing and stabilizing tubulin in a quasi-native conformation. Cofactor E binds to the cofactor D-tubulin complex; interaction with cofactor C then causes the release of tubulin polypeptides that are committed to the native state.

Tubulin-folding protein; involved in the final step of the tubulin folding pathway. This is Tubulin-specific chaperone C (tbcc) from Dictyostelium discoideum (Social amoeba).